The primary structure comprises 142 residues: Conidial pigment biosynthesis dehydratase EthD (142 aa).

The EthD domain occupies 25-121 (PGMSEAAYRE…PDHQKFADTS (97 aa)).

The protein belongs to the tpcK family.

It participates in pigment biosynthesis. Its function is as follows. Dehydratase; part of the Pks1 gene cluster that mediates the biosynthesis of an anthraquinone derivative pigment that contributes to conidial pigmentation that provides protection from UV radiation, heat and cold stress. The polyketide synthase Pks1 produces 1-acetyl-2,4,6,8-tetrahydroxy-9,10-anthraquinone though condensation of acetyl-CoA with malonyl-CoA. The dehydratase EthD and the laccase Mlac1 further convert the anthraquinone derivative into the final conidial pigment. This is Conidial pigment biosynthesis dehydratase EthD from Metarhizium robertsii (strain ARSEF 23 / ATCC MYA-3075) (Metarhizium anisopliae (strain ARSEF 23)).